The primary structure comprises 379 residues: Succinyl-diaminopimelate desuccinylase (379 aa).

His-70 lines the Zn(2+) pocket. Asp-72 is an active-site residue. Asp-103 is a Zn(2+) binding site. Residue Glu-137 is the Proton acceptor of the active site. Glu-138, Glu-166, and His-352 together coordinate Zn(2+).

It belongs to the peptidase M20A family. DapE subfamily. In terms of assembly, homodimer. The cofactor is Zn(2+). Co(2+) is required as a cofactor.

It carries out the reaction N-succinyl-(2S,6S)-2,6-diaminopimelate + H2O = (2S,6S)-2,6-diaminopimelate + succinate. It participates in amino-acid biosynthesis; L-lysine biosynthesis via DAP pathway; LL-2,6-diaminopimelate from (S)-tetrahydrodipicolinate (succinylase route): step 3/3. Its function is as follows. Catalyzes the hydrolysis of N-succinyl-L,L-diaminopimelic acid (SDAP), forming succinate and LL-2,6-diaminopimelate (DAP), an intermediate involved in the bacterial biosynthesis of lysine and meso-diaminopimelic acid, an essential component of bacterial cell walls. The polypeptide is Succinyl-diaminopimelate desuccinylase (Paraburkholderia xenovorans (strain LB400)).